Consider the following 564-residue polypeptide: Ovochymase-2 (564 aa).

The first 22 residues, 1-22 (MLISRNKLILLLGIVFFERGKS), serve as a signal peptide directing secretion. A propeptide spans 23-51 (ATLSLPKAPSCGQSLVKVQPWNYFNIFSR) (activation peptide). Residues 52-299 (ILGGSQVEKG…VLPWIHEHIQ (248 aa)) enclose the Peptidase S1 domain. Cysteine 77 and cysteine 93 form a disulfide bridge. Residue histidine 92 is the Charge relay system of the active site. An N-linked (GlcNAc...) asparagine glycan is attached at asparagine 104. Position 119 (glutamate 119) interacts with Ca(2+). The active-site Charge relay system is aspartate 142. Intrachain disulfides connect cysteine 176/cysteine 246, cysteine 207/cysteine 225, cysteine 236/cysteine 265, cysteine 311/cysteine 341, and cysteine 365/cysteine 384. The active-site Charge relay system is the serine 240. 2 consecutive CUB domains span residues 311–421 (CSEQ…YKAL) and 431–543 (CSYL…VSFI). N-linked (GlcNAc...) asparagine glycans are attached at residues asparagine 415 and asparagine 451. 2 disulfide bridges follow: cysteine 431/cysteine 458 and cysteine 485/cysteine 506. N-linked (GlcNAc...) asparagine glycosylation occurs at asparagine 530.

It belongs to the peptidase S1 family.

It localises to the secreted. Functionally, may be required for sperm ADAM3 processing and consequential sperm fertilizing ability. In vitro, has an endopeptidase activity. The chain is Ovochymase-2 from Homo sapiens (Human).